A 1057-amino-acid polypeptide reads, in one-letter code: Probable sucrose-phosphate synthase 1 (1057 aa).

Over residues 103 to 115 (RRLERERGRREAT) the composition is skewed to basic and acidic residues. 3 disordered regions span residues 103-143 (RRLE…STRS), 439-459 (PQDGDMDGETEGNEDNPASPD), and 670-693 (RHPQWQRTDDGGETSESDSPGDSL). A compositionally biased stretch (acidic residues) spans 442–452 (GDMDGETEGNE).

The protein belongs to the glycosyltransferase 1 family. As to quaternary structure, homodimer or homotetramer.

It catalyses the reaction beta-D-fructose 6-phosphate + UDP-alpha-D-glucose = sucrose 6(F)-phosphate + UDP + H(+). It functions in the pathway glycan biosynthesis; sucrose biosynthesis; sucrose from D-fructose 6-phosphate and UDP-alpha-D-glucose: step 1/2. Its activity is regulated as follows. Activity is regulated by phosphorylation and moderated by concentration of metabolites and light. Its function is as follows. Plays a role in photosynthetic sucrose synthesis by catalyzing the rate-limiting step of sucrose biosynthesis from UDP-glucose and fructose- 6-phosphate. Involved in the regulation of carbon partitioning in the leaves of plants. May regulate the synthesis of sucrose and therefore play a major role as a limiting factor in the export of photoassimilates out of the leaf. Plays a role for sucrose availability that is essential for plant growth and fiber elongation. The protein is Probable sucrose-phosphate synthase 1 (SPS1) of Citrus unshiu (Satsuma mandarin).